A 595-amino-acid polypeptide reads, in one-letter code: Polyadenylate-binding protein-interacting protein 4 (595 aa).

A Sm domain is found at 48–113; sequence RLVYFTTCKI…SRSEFVRKPP (66 aa). Polar residues-rich tracts occupy residues 302–313 and 326–346; these read GGSSTSDGQKPA and GDSQSSRKNKNVDQSCSTSKQ. Disordered regions lie at residues 302–505 and 536–595; these read GGSS…FYYP and MYHP…KGRE. The segment covering 364 to 382 has biased composition (basic and acidic residues); sequence DEQRRKNNEEVSHNNRSAE. The segment covering 416-465 has biased composition (low complexity); it reads SQVSSKTKSESSFGQSASRSSESRPGPSTSSRPGLSPSSSIGSMASSEKS. The PAM2-like 1; degenerate motif lies at 466–474; that stretch reads TLNPNAKEF. The PAM2-like 2 signature appears at 475–485; that stretch reads KLNPKAKSFKP. 2 stretches are compositionally biased toward low complexity: residues 488–501 and 548–570; these read SAAAPPQSPIADAS and QPQYPQQQMIPGQQQQQMIPGQQ.

As to expression, expressed in cauline leaves, stems, rosette leaves, immature siliques and primary inflorescences.

This Arabidopsis thaliana (Mouse-ear cress) protein is Polyadenylate-binding protein-interacting protein 4 (CID4).